Reading from the N-terminus, the 419-residue chain is Synaptosomal-associated protein 47 (419 aa).

T-SNARE coiled-coil homology domains are found at residues 108-170 (PQGA…LSEL) and 356-418 (VLQP…MRKL).

This sequence belongs to the SVAP1 family.

Its function is as follows. May play a role in intracellular membrane fusion. The chain is Synaptosomal-associated protein 47 (snap47) from Danio rerio (Zebrafish).